Here is a 166-residue protein sequence, read N- to C-terminus: Prorelaxin H1 (166 aa).

An N-terminal signal peptide occupies residues 1 to 5 (SRAVA). 3 disulfide bridges follow: Cys16-Cys153, Cys28-Cys166, and Cys152-Cys157. A propeptide spans 37–139 (SLSQEDAPQT…KYLGLDTHSQ (103 aa)) (connecting peptide).

The protein belongs to the insulin family. As to quaternary structure, heterodimer of a B chain and an A chain linked by two disulfide bonds. As to expression, expressed in the corpus luteum of pregnancy but not in the placenta.

It localises to the secreted. Functionally, relaxin is an ovarian hormone that acts with estrogen to produce dilatation of the birth canal in many mammals. May be involved in remodeling of connective tissues during pregnancy, promoting growth of pubic ligaments and ripening of the cervix. The polypeptide is Prorelaxin H1 (RNL1) (Pan troglodytes (Chimpanzee)).